The chain runs to 1210 residues: Histone-lysine N-methyltransferase EHMT2 (1210 aa).

A compositionally biased stretch (low complexity) spans 1 to 23 (MAAAAGAAAAAAAEGEAPAEMGA). Disordered stretches follow at residues 1-262 (MAAA…LEEW) and 280-386 (DERV…EYME). Position 2 is an N-acetylalanine (A2). The segment covering 26-38 (LEKETRGATERVH) has biased composition (basic and acidic residues). At S40 the chain carries Phosphoserine. T44 is subject to Phosphothreonine. At S47 the chain carries Phosphoserine. Residues 105 to 128 (GRILLGHATKSFPSSPSKGGSCPS) are compositionally biased toward low complexity. Residue S140 is modified to Phosphoserine. Over residues 155 to 165 (PGAQGAAAAGS) the composition is skewed to low complexity. Phosphoserine is present on S173. K185 bears the N6,N6,N6-trimethyllysine; by EHMT2; alternate mark. N6,N6-dimethyllysine; by EHMT2; alternate is present on K185. Positions 198-216 (PEKRPPEIQHFRMSDDVHS) are enriched in basic and acidic residues. Residues K219 and K229 each participate in a glycyl lysine isopeptide (Lys-Gly) (interchain with G-Cter in SUMO2) cross-link. Phosphoserine is present on residues S232, S242, and S246. The span at 280-291 (DERVDSDSKSEV) shows a compositional bias: basic and acidic residues. The span at 298–327 (LSEEEEEEEEEEEEEEEEEEEEEEEEDEES) shows a compositional bias: acidic residues. The span at 338-347 (GRRKAKKKWR) shows a compositional bias: basic residues. Phosphoserine occurs at positions 350, 412, and 413. Residues 548–608 (IPRGDGVTPP…LADTIDSSGP (61 aa)) form a disordered region. Residue T555 is modified to Phosphothreonine. Position 569 is a phosphoserine (S569). Residue K634 forms a Glycyl lysine isopeptide (Lys-Gly) (interchain with G-Cter in SUMO2) linkage. ANK repeat units lie at residues 649–678 (FHPRQLYLSVKQGELQKVILMLLDNLDPNF), 684–713 (SKRTPLHAAAQKGSVEICHVLLQAGANINA), 717–746 (QQRTPLMEAVVNNHLEVARYMVQRGGCVYS), 750–780 (DGSTCLHHAAKIGNLEMVSLLLSTGQVDVNA), 784–813 (GGWTPIIWAAEHKHIEVIRMLLTRGADVTL), 817–846 (EENICLHWASFTGSAAIAEVLLNARCDLHA), and 850–879 (HGDTPLHIAARESYHDCVLLFLSRGANPEL). A histone H3K9me binding region spans residues 817 to 819 (EEN). Residues 972 to 1035 (QHCTCVDDCS…NCKNRVVQSG (64 aa)) form the Pre-SET domain. Zn(2+) is bound by residues C974, C976, C980, C985, C987, C1017, C1021, C1023, and C1027. An SET domain is found at 1038-1155 (VRLQLYRTAK…TGEELGFDYG (118 aa)). S-adenosyl-L-methionine contacts are provided by residues 1048-1050 (MGW), Y1085, and 1112-1113 (NH). The segment at 1074-1093 (DAEADVREDDSYLFDLDNKD) is interaction with histone H3. Residue C1115 coordinates Zn(2+). The interaction with histone H3 stretch occupies residues 1154–1157 (YGDR). Residues 1164-1180 (KYFTCQCGSEKCKHSAE) form the Post-SET domain. C1168 contacts Zn(2+). Residue Q1169 coordinates S-adenosyl-L-methionine. The Zn(2+) site is built by C1170 and C1175. S1204 is modified (phosphoserine). Phosphothreonine is present on T1210.

This sequence belongs to the class V-like SAM-binding methyltransferase superfamily. Histone-lysine methyltransferase family. Suvar3-9 subfamily. As to quaternary structure, heterodimer; heterodimerizes with EHMT1/GLP. Interacts with GFI1B and WIZ. Part of the E2F6.com-1 complex in G0 phase composed of E2F6, MGA, MAX, TFDP1, CBX3, BAT8, EHMT1, RING1, RNF2, MBLR, L3MBTL2 and YAF2. Part of a complex composed of TRIM28, HDAC1, HDAC2 and EHMT2. Interacts with UHRF1. Interacts with CDYL. Interacts with REST only in the presence of CDYL. Part of a complex containing at least CDYL, REST, WIZ, SETB1, EHMT1 and EHMT2. Interacts with PRDM9 and CDYL; interaction only takes place when PRDM9 is bound to hotspot DNA. Interacts with SMYD5. In terms of processing, methylated at Lys-185; automethylated. As to expression, expressed in all tissues examined, with high levels in fetal liver, thymus, lymph node, spleen and peripheral blood leukocytes and lower level in bone marrow.

It localises to the nucleus. The protein localises to the chromosome. It carries out the reaction N(6)-methyl-L-lysyl(9)-[histone H3] + S-adenosyl-L-methionine = N(6),N(6)-dimethyl-L-lysyl(9)-[histone H3] + S-adenosyl-L-homocysteine + H(+). The enzyme catalyses L-lysyl(9)-[histone H3] + S-adenosyl-L-methionine = N(6)-methyl-L-lysyl(9)-[histone H3] + S-adenosyl-L-homocysteine + H(+). Its function is as follows. Histone methyltransferase that specifically mono- and dimethylates 'Lys-9' of histone H3 (H3K9me1 and H3K9me2, respectively) in euchromatin. H3K9me represents a specific tag for epigenetic transcriptional repression by recruiting HP1 proteins to methylated histones. Also mediates monomethylation of 'Lys-56' of histone H3 (H3K56me1) in G1 phase, leading to promote interaction between histone H3 and PCNA and regulating DNA replication. Also weakly methylates 'Lys-27' of histone H3 (H3K27me). Also required for DNA methylation, the histone methyltransferase activity is not required for DNA methylation, suggesting that these 2 activities function independently. Probably targeted to histone H3 by different DNA-binding proteins like E2F6, MGA, MAX and/or DP1. May also methylate histone H1. In addition to the histone methyltransferase activity, also methylates non-histone proteins: mediates dimethylation of 'Lys-373' of p53/TP53. Also methylates CDYL, WIZ, ACIN1, DNMT1, HDAC1, ERCC6, KLF12 and itself. The sequence is that of Histone-lysine N-methyltransferase EHMT2 (EHMT2) from Homo sapiens (Human).